A 137-amino-acid polypeptide reads, in one-letter code: Large ribosomal subunit protein uL16 (137 aa).

This sequence belongs to the universal ribosomal protein uL16 family. Part of the 50S ribosomal subunit.

Its function is as follows. Binds 23S rRNA and is also seen to make contacts with the A and possibly P site tRNAs. The polypeptide is Large ribosomal subunit protein uL16 (Bradyrhizobium sp. (strain BTAi1 / ATCC BAA-1182)).